The sequence spans 279 residues: HTH-type transcriptional regulator HdfR (279 aa).

Positions 1–58 (MDTELLKTFLEVSRTRHFGRAAESLYLTQSAVSFRIRQLENQLGVNLFTRHRNNIRLT) constitute an HTH lysR-type domain. The H-T-H motif DNA-binding region spans 18 to 37 (FGRAAESLYLTQSAVSFRIR).

The protein belongs to the LysR transcriptional regulatory family.

Negatively regulates the transcription of the flagellar master operon flhDC by binding to the upstream region of the operon. The protein is HTH-type transcriptional regulator HdfR of Escherichia coli (strain SE11).